A 1711-amino-acid chain; its full sequence is Protein chiffon (1711 aa).

Disordered stretches follow at residues methionine 1–proline 31, lysine 87–aspartate 129, and threonine 244–serine 307. The segment at methionine 1–isoleucine 400 is sufficient for interaction with and activation of Cdc7. Composition is skewed to low complexity over residues alanine 10–threonine 30 and threonine 97–serine 109. 2 positions are modified to phosphoserine: serine 306 and serine 307. The segment at serine 307 to valine 356 adopts a DBF4-type zinc-finger fold. 4 residues coordinate Zn(2+): cysteine 314, cysteine 317, histidine 327, and histidine 333. The segment covering valine 365–serine 378 has biased composition (acidic residues). 11 disordered regions span residues valine 365–serine 507, methionine 531–leucine 647, leucine 733–arginine 771, threonine 791–glutamine 817, glutamine 908–lysine 945, arginine 1005–lysine 1025, glutamine 1055–serine 1157, glutamate 1271–aspartate 1290, methionine 1303–asparagine 1329, leucine 1343–aspartate 1370, and leucine 1383–alanine 1644. Phosphoserine is present on residues serine 406, serine 407, serine 417, serine 432, and serine 435. Over residues glutamine 429–leucine 439 the composition is skewed to polar residues. A compositionally biased stretch (low complexity) spans proline 445–threonine 454. Serine 467 bears the Phosphoserine mark. The segment at residues proline 493–serine 505 is a DNA-binding region (a.T hook). Over residues valine 537 to leucine 546 the composition is skewed to polar residues. A phosphoserine mark is found at serine 542, serine 543, and serine 544. Basic and acidic residues predominate over residues aspartate 549 to glycine 560. A compositionally biased stretch (low complexity) spans serine 563 to glutamate 575. The segment covering isoleucine 588–valine 601 has biased composition (basic residues). Positions valine 793 to lysine 812 are enriched in polar residues. Basic and acidic residues predominate over residues glutamine 908–glutamate 932. Over residues serine 1006 to serine 1018 the composition is skewed to low complexity. Phosphothreonine is present on threonine 1081. Phosphoserine occurs at positions 1091 and 1092. Polar residues predominate over residues serine 1092–alanine 1101. Residues threonine 1398–threonine 1407 show a composition bias toward low complexity. Residues threonine 1400–alanine 1695 are sufficient for interaction with Gcn5. Positions alanine 1435–alanine 1445 are enriched in basic and acidic residues. 2 stretches are compositionally biased toward acidic residues: residues aspartate 1453–methionine 1475 and glutamine 1483–aspartate 1518. Composition is skewed to polar residues over residues isoleucine 1536–serine 1545 and histidine 1556–serine 1591.

In terms of assembly, component of the Dbf4-dependent kinase (DDK) complex consisting of Cdc7 and the Dbf4 ortholog chif. Interacts with Cdc7; the interaction is direct. Interacts with CG5790. As to quaternary structure, component of the Chiffon histone acetyltransferase (CHAT) complex consisting of Ada3, Sgf29, Gcn5, chif/chiffon and Ada2b (Isoform A). Interacts (via C-terminus) with Gcn5; the interaction is direct but weak in the absence of other CHAT components. May be proteolytically cleaved to produce a N-terminal 50 kDa product.

Its subcellular location is the nucleus. Functionally, a bicistronic gene producing two proteins that are components of different complexes and have separate properties and functions. Full-length protein is proteolytically cleaved, producing a ~50kDa N-terminal product (Chiffon-A) that forms part of the DDK complex; it is unclear if the C-terminal proteolytic product is stable or functional. Alternative initiation from an internal ribosome entry site produces a C-terminal ~48kDa product (Chiffon-B or Isoform E) that forms part of the CHAT complex. Involved in regulation of gene expression during embryonic development. Regulatory component of the Dbf4-dependent kinase (DDK) complex. Required for the amplification stage, but not the preceding endoreplication stage of DNA replication in egg chamber follicle cells of the ovary. May be involved in initiation of DNA replication; activation of the chorion gene origins. May have a role in eye and thoracic bristle development. Required for female fertility; is not required for oogenesis but is required maternally for early embryo development. Its function is as follows. Component of the CHAT histone acetyltransferase complex, which predominantly acetylates histone H3. As part of the CHAT complex involved in acetylation of histone H3 on 'Lys-10' (H3K9ac), 'Lys-15' (H3K14ac) and 'Lys-19' (H3K18ac), but not 'Lys-25' (H3K24ac). May also regulate other histone acetyltransferase complexes. Essential for viability. Not required for early stages of embryonic development. May be involved in zygotic genome activation during embryogenesis. The chain is Protein chiffon from Drosophila melanogaster (Fruit fly).